The primary structure comprises 96 residues: Small ribosomal subunit protein bS6 (96 aa).

It belongs to the bacterial ribosomal protein bS6 family.

Its function is as follows. Binds together with bS18 to 16S ribosomal RNA. This is Small ribosomal subunit protein bS6 from Streptococcus equi subsp. equi (strain 4047).